The following is a 441-amino-acid chain: Histidinol dehydrogenase (441 aa).

Substrate-binding residues include threonine 240, glutamine 262, and histidine 265. The Zn(2+) site is built by glutamine 262 and histidine 265. Residues glutamate 332 and histidine 333 each act as proton acceptor in the active site. Histidine 333, aspartate 366, glutamate 420, and histidine 425 together coordinate substrate. Position 366 (aspartate 366) interacts with Zn(2+). Histidine 425 contacts Zn(2+).

This sequence belongs to the histidinol dehydrogenase family. Zn(2+) serves as cofactor.

The catalysed reaction is L-histidinol + 2 NAD(+) + H2O = L-histidine + 2 NADH + 3 H(+). The protein operates within amino-acid biosynthesis; L-histidine biosynthesis; L-histidine from 5-phospho-alpha-D-ribose 1-diphosphate: step 9/9. Catalyzes the sequential NAD-dependent oxidations of L-histidinol to L-histidinaldehyde and then to L-histidine. In Streptomyces avermitilis (strain ATCC 31267 / DSM 46492 / JCM 5070 / NBRC 14893 / NCIMB 12804 / NRRL 8165 / MA-4680), this protein is Histidinol dehydrogenase.